The following is a 147-amino-acid chain: Nucleoside diphosphate kinase (147 aa).

The ATP site is built by Lys11, Phe59, Arg87, Thr93, Arg104, and Asn114. The active-site Pros-phosphohistidine intermediate is His117.

This sequence belongs to the NDK family. Mg(2+) is required as a cofactor.

The protein localises to the cytoplasm. The enzyme catalyses a 2'-deoxyribonucleoside 5'-diphosphate + ATP = a 2'-deoxyribonucleoside 5'-triphosphate + ADP. The catalysed reaction is a ribonucleoside 5'-diphosphate + ATP = a ribonucleoside 5'-triphosphate + ADP. Major role in the synthesis of nucleoside triphosphates other than ATP. The ATP gamma phosphate is transferred to the NDP beta phosphate via a ping-pong mechanism, using a phosphorylated active-site intermediate. The chain is Nucleoside diphosphate kinase from Sulfurisphaera tokodaii (strain DSM 16993 / JCM 10545 / NBRC 100140 / 7) (Sulfolobus tokodaii).